Reading from the N-terminus, the 238-residue chain is Thiamine import ATP-binding protein ThiQ (238 aa).

Positions Leu2 to Val230 constitute an ABC transporter domain. Gly32–Ser39 lines the ATP pocket.

The protein belongs to the ABC transporter superfamily. Thiamine importer (TC 3.A.1.19.1) family. As to quaternary structure, the complex is composed of two ATP-binding proteins (ThiQ), two transmembrane proteins (ThiP) and a solute-binding protein (ThiB).

It is found in the cell inner membrane. It catalyses the reaction thiamine(out) + ATP + H2O = thiamine(in) + ADP + phosphate + H(+). Its function is as follows. Part of the ABC transporter complex ThiBPQ involved in thiamine import. Responsible for energy coupling to the transport system. The polypeptide is Thiamine import ATP-binding protein ThiQ (Vibrio cholerae serotype O1 (strain ATCC 39315 / El Tor Inaba N16961)).